We begin with the raw amino-acid sequence, 366 residues long: Heat-inducible transcription repressor HrcA (366 aa).

The span at 298-309 shows a compositional bias: polar residues; it reads SSGYGQSSTPSA. The disordered stretch occupies residues 298–318; sequence SSGYGQSSTPSANVEHEEYDT.

It belongs to the HrcA family.

Functionally, negative regulator of class I heat shock genes (grpE-dnaK-dnaJ and groELS operons). Prevents heat-shock induction of these operons. This is Heat-inducible transcription repressor HrcA from Bifidobacterium animalis subsp. lactis (strain AD011).